A 129-amino-acid chain; its full sequence is Putative pre-16S rRNA nuclease (129 aa).

Belongs to the YqgF nuclease family.

The protein resides in the cytoplasm. In terms of biological role, could be a nuclease involved in processing of the 5'-end of pre-16S rRNA. The protein is Putative pre-16S rRNA nuclease of Campylobacter jejuni subsp. doylei (strain ATCC BAA-1458 / RM4099 / 269.97).